We begin with the raw amino-acid sequence, 397 residues long: Mannitol-1-phosphate 5-dehydrogenase (397 aa).

NAD(+) is bound at residue Ala9 to Gly20. The active site involves Lys220.

Belongs to the mannitol dehydrogenase family. In terms of assembly, monomer.

The enzyme catalyses D-mannitol 1-phosphate + NAD(+) = beta-D-fructose 6-phosphate + NADH + H(+). Functionally, catalyzes the NAD(H)-dependent interconversion of D-fructose 6-phosphate and D-mannitol 1-phosphate in the mannitol metabolic pathway. The sequence is that of Mannitol-1-phosphate 5-dehydrogenase from Podospora anserina (strain S / ATCC MYA-4624 / DSM 980 / FGSC 10383) (Pleurage anserina).